The sequence spans 93 residues: Small ribosomal subunit protein uS19 (93 aa).

The protein belongs to the universal ribosomal protein uS19 family.

Functionally, protein S19 forms a complex with S13 that binds strongly to the 16S ribosomal RNA. This Wolinella succinogenes (strain ATCC 29543 / DSM 1740 / CCUG 13145 / JCM 31913 / LMG 7466 / NCTC 11488 / FDC 602W) (Vibrio succinogenes) protein is Small ribosomal subunit protein uS19.